The chain runs to 750 residues: Putative tyrosine-protein kinase EpsB (750 aa).

At Met1–Arg31 the chain is on the cytoplasmic side. The helical transmembrane segment at Trp32–Ala52 threads the bilayer. Topologically, residues Arg53 to Lys444 are periplasmic. Residues Leu445–Val465 form a helical membrane-spanning segment. Topologically, residues Arg466 to Ala750 are cytoplasmic.

This sequence belongs to the etk/wzc family.

It is found in the cell inner membrane. It carries out the reaction L-tyrosyl-[protein] + ATP = O-phospho-L-tyrosyl-[protein] + ADP + H(+). In terms of biological role, probably involved in polymerization and/or export of exopolysaccharide EPS I which functions as a virulence factor. May be involved in an ATP-dependent process in the pathway for EPS I production, possibly export of the trimeric repeat units across the inner membrane or their polymerization. This Ralstonia solanacearum (Pseudomonas solanacearum) protein is Putative tyrosine-protein kinase EpsB (epsB).